The chain runs to 112 residues: Colipase (112 aa).

The signal sequence occupies residues 1–17 (MEKILVLLLVALAVVYA). The propeptide at 18–22 (VPDPR) is enterostatin, activation peptide. 5 disulfides stabilise this stretch: Cys34-Cys45, Cys40-Cys56, Cys44-Cys78, Cys66-Cys86, and Cys80-Cys104.

Belongs to the colipase family. As to quaternary structure, forms a 1:1 stoichiometric complex with pancreatic lipase. In terms of tissue distribution, expressed by the pancreas.

Its subcellular location is the secreted. In terms of biological role, colipase is a cofactor of pancreatic lipase. It allows the lipase to anchor itself to the lipid-water interface. Without colipase the enzyme is washed off by bile salts, which have an inhibitory effect on the lipase. Its function is as follows. Enterostatin has a biological activity as a satiety signal. The protein is Colipase (CLPS) of Canis lupus familiaris (Dog).